A 274-amino-acid polypeptide reads, in one-letter code: Large ribosomal subunit protein uL2 (274 aa).

The segment at 223–274 (VAMNPVDHPHGGGEGRTSGGRHPVTPWGVPTKGYKTRSNKRTDKYIVRRRNK) is disordered.

The protein belongs to the universal ribosomal protein uL2 family. As to quaternary structure, part of the 50S ribosomal subunit. Forms a bridge to the 30S subunit in the 70S ribosome.

One of the primary rRNA binding proteins. Required for association of the 30S and 50S subunits to form the 70S ribosome, for tRNA binding and peptide bond formation. It has been suggested to have peptidyltransferase activity; this is somewhat controversial. Makes several contacts with the 16S rRNA in the 70S ribosome. The sequence is that of Large ribosomal subunit protein uL2 from Shewanella putrefaciens (strain CN-32 / ATCC BAA-453).